A 188-amino-acid chain; its full sequence is UPF0200 protein M164_1169 (188 aa).

15–22 provides a ligand contact to ATP; that stretch reads GMPGSGKS.

The protein belongs to the UPF0200 family.

The polypeptide is UPF0200 protein M164_1169 (Saccharolobus islandicus (strain M.16.4 / Kamchatka #3) (Sulfolobus islandicus)).